We begin with the raw amino-acid sequence, 208 residues long: Protein DEHYDRATION-INDUCED 19 homolog 6 (208 aa).

Residues 151–190 (VDSPRRSEADAEGHGSSSSDDQKRREQGVMDDASKEELEE) form a disordered region. Composition is skewed to basic and acidic residues over residues 153 to 163 (SPRRSEADAEG) and 170 to 190 (DDQKRREQGVMDDASKEELEE).

The protein belongs to the Di19 family.

The polypeptide is Protein DEHYDRATION-INDUCED 19 homolog 6 (DI19-6) (Oryza sativa subsp. japonica (Rice)).